We begin with the raw amino-acid sequence, 443 residues long: MVHGRVSRLSVHDVRFPTSLGGHGSDAMHTDPDYSAAYVVLETDAEDGLKGYGITFTLGRGTEVVVCAVNALAPHVLNKDLGEIVGDFRGFYRQLTSDGQLRWIGPEKGVVHLATAAVLNAVWDLWAKQEGKPLWKLLVDMDPRTLVSCIDFRYITDVLTEEEACEILRQSQVGKKEREEQMLAHGYPAYTTSCAWLGYPDATLKQLCSEALKDGWTRFKVKVGADLQDDIRRCRLVRNMIGPEKTLMMDANQRWDVPEAVEWMTKLAEFKPLWIEEPTSPDDILGHAAISKALAPLGIGVATGEQCHNRVIFKQLLQAKALKFLQIDSCRLGSVNENLSVLLMAKKFEIPVCPHAGGVGLCELVQHLIIFDFISVSASLQDRMCEYVDHLHEHFKYPVLIREAAYMPPKDAGYSTEMKEDSVKRHRYPDGEVWKKLLSAQGN.

Substrate is bound by residues 24–26 (GSD) and Tyr34. Ser148 is modified (phosphoserine). Residue Lys220 participates in substrate binding. The Proton donor/acceptor role is filled by Lys222. Position 250 (Asp250) interacts with Mg(2+). Substrate is bound by residues Asn252, Glu276, Glu305, 355 to 357 (HAG), and Glu386. Mg(2+) is bound by residues Glu276 and Glu305. His355 is an active-site residue.

The protein belongs to the mandelate racemase/muconate lactonizing enzyme family. ENOSF1 subfamily. Mg(2+) serves as cofactor. Could be sumoylated.

Its subcellular location is the mitochondrion. It catalyses the reaction L-fuconate = 2-dehydro-3-deoxy-L-fuconate + H2O. Its function is as follows. Plays a role in the catabolism of L-fucose, a sugar that is part of the carbohydrates that are attached to cellular glycoproteins. Catalyzes the dehydration of L-fuconate to 2-keto-3-deoxy-L-fuconate by the abstraction of the 2-proton to generate an enediolate intermediate that is stabilized by the magnesium ion. May down-regulate thymidylate synthase activity, possibly already at the RNA level, by promoting the degradation of TYMS mRNA via an antisense RNA-based mechanism. The polypeptide is Mitochondrial enolase superfamily member 1 (ENOSF1) (Bos taurus (Bovine)).